The following is a 162-amino-acid chain: Peptidyl-prolyl cis-trans isomerase-like 1 (162 aa).

The 155-residue stretch at 1-155 folds into the PPIase cyclophilin-type domain; the sequence is MATDVTFDTS…DEVKILRAKV (155 aa).

It belongs to the cyclophilin-type PPIase family. PPIL1 subfamily.

It catalyses the reaction [protein]-peptidylproline (omega=180) = [protein]-peptidylproline (omega=0). Functionally, PPIases accelerate the folding of proteins. It catalyzes the cis-trans isomerization of proline imidic peptide bonds in oligopeptides. The sequence is that of Peptidyl-prolyl cis-trans isomerase-like 1 (cyp1) from Emericella nidulans (strain FGSC A4 / ATCC 38163 / CBS 112.46 / NRRL 194 / M139) (Aspergillus nidulans).